Reading from the N-terminus, the 506-residue chain is Maturase K (506 aa).

Belongs to the intron maturase 2 family. MatK subfamily.

The protein resides in the plastid. It localises to the chloroplast. Its function is as follows. Usually encoded in the trnK tRNA gene intron. Probably assists in splicing its own and other chloroplast group II introns. The chain is Maturase K from Mentzelia lindleyi (Blazing star).